A 66-amino-acid chain; its full sequence is MAKGKDVRVTIILECTSCVRNDIKKESAGISRYITQKNRHNTPSRLELRKFCPYCFKHTIHGEIKK.

Belongs to the bacterial ribosomal protein bL33 family.

It is found in the plastid. The protein localises to the chloroplast. In Arabis hirsuta (Hairy rock-cress), this protein is Large ribosomal subunit protein bL33c.